A 534-amino-acid polypeptide reads, in one-letter code: GMP synthase [glutamine-hydrolyzing] (534 aa).

In terms of domain architecture, Glutamine amidotransferase type-1 spans 4–202 (KILILDFGSQ…VLEIAKAQPD (199 aa)). Catalysis depends on cysteine 81, which acts as the Nucleophile. Active-site residues include histidine 176 and glutamate 178. One can recognise a GMPS ATP-PPase domain in the interval 203 to 402 (WVMKDHVAEA…LGLPHDMVYR (200 aa)). 230 to 236 (SGGVDSS) contacts ATP.

As to quaternary structure, homodimer.

It catalyses the reaction XMP + L-glutamine + ATP + H2O = GMP + L-glutamate + AMP + diphosphate + 2 H(+). The protein operates within purine metabolism; GMP biosynthesis; GMP from XMP (L-Gln route): step 1/1. Functionally, catalyzes the synthesis of GMP from XMP. This Methylibium petroleiphilum (strain ATCC BAA-1232 / LMG 22953 / PM1) protein is GMP synthase [glutamine-hydrolyzing].